A 206-amino-acid chain; its full sequence is Small ribosomal subunit protein uS2 (206 aa).

This sequence belongs to the universal ribosomal protein uS2 family.

This Methanothrix thermoacetophila (strain DSM 6194 / JCM 14653 / NBRC 101360 / PT) (Methanosaeta thermophila) protein is Small ribosomal subunit protein uS2.